The primary structure comprises 171 residues: Anthrone oxygenase dmxR16 (171 aa).

The next 3 membrane-spanning stretches (helical) occupy residues 21–41 (VIAA…ISMI), 67–87 (GHII…FSAL), and 96–116 (YALA…FMTP). 2 N-linked (GlcNAc...) asparagine glycosylation sites follow: N118 and N129. The chain crosses the membrane as a helical span at residues 145–165 (WLHATRSMFPLIGAILGFTGI).

This sequence belongs to the anthrone oxygenase family.

Its subcellular location is the membrane. The catalysed reaction is emodin anthrone + O2 = emodin + H2O + H(+). Its pathway is secondary metabolite biosynthesis. Its function is as follows. Anthrone oxygenase; part of the gene cluster that mediates the biosynthesis of the dimeric xanthones cryptosporioptides. The pathway begins with the synthesis of atrochrysone thioester by the polyketide synthase dmx-nrPKS. The atrochrysone carboxyl ACP thioesterase dmxR1 then breaks the thioester bond and releases the atrochrysone carboxylic acid from dmx-nrPKS. Atrochrysone carboxylic acid is decarboxylated by the decarboxylase dmxR15, and oxidized by the anthrone oxygenase dmxR16 to yield emodin. Emodin is then reduced to emodin hydroquinone by the oxidoreductase dmxR7. A-ring reduction by the short chain dehydrogenase dmxR18, dehydration by the scytalone dehydratase-like protein dmxR17 and probable spontaneous re-oxidation, results in overall deoxygenation to chrysophanol. Baeyer-Villiger oxidation by the Baeyer-Villiger monooxygenase (BVMO) dmxR6 then yields monodictylactone in equilibrium with monodictyphenone. In the case of the cryptosporioptides biosynthesis, monodictylactone is reduced at C-12 to an alcohol (by the short chain dehydrogenases dmxR12 or dmxR8) and hydroxylated at C-5 by dmxR9, yielding the electron-rich aromatic which could eliminate H(2)O to form the ortho-quinonemethide, followed by tautomerisation to paraquinone and complete the formal reduction to produce the 10-methylgroup. Conjugate addition of C-4a-OH to the resulting paraquinone by the monooxygenase dmxR10 then gives cyclohexadienone, which is then reduced at C-5 by the short chain dehydrogenase dmxR3 to give the dihydroxanthone. The 6,7-epoxide in the cryptosporioptides could be introduced by the cytochrome P450 monooxygenase dmxL3. The highly reducing PKS dmxL2 manufactures butyrate, which is further carboxylated by dmxL1 to form ethylmalonate. It is not yet clear whether the carboxylation occurs while the butyrate is attached to the ACP of dmxL2, but this unusual fungal metabolite could then be esterified to O-5 by the O-acetyltransferase dmxR13. Finally, dimerization performed by dmxR5 gives the observed dimers cryptosporioptides A, B and C as the final products of the pathway. In Cryptosporiopsis sp. (strain 8999), this protein is Anthrone oxygenase dmxR16.